The primary structure comprises 118 residues: MSLLNKPKSEMTPEELQKREEEEFNTGPLSVLTQSVKNNTQVLINCRNNKKLLGRVKAFDRHCNMVLENVKEMWTEVPKSGKGKKKSKPVNKDRYISKMFLRGDSVIVVLRNPLIAGK.

Residues 1-31 form a disordered region; that stretch reads MSLLNKPKSEMTPEELQKREEEEFNTGPLSV. Position 2 is an N-acetylserine (Ser2). Residues Lys6 and Lys8 each participate in a glycyl lysine isopeptide (Lys-Gly) (interchain with G-Cter in SUMO2) cross-link. Residues 7 to 21 show a composition bias toward basic and acidic residues; that stretch reads PKSEMTPEELQKREE. Ser9 is modified (phosphoserine). A Phosphothreonine modification is found at Thr12. The region spanning 29–115 is the Sm domain; it reads LSVLTQSVKN…VIVVLRNPLI (87 aa).

It belongs to the snRNP core protein family. In terms of assembly, core component of the spliceosomal U1, U2, U4 and U5 small nuclear ribonucleoproteins (snRNPs), the building blocks of the spliceosome. Most spliceosomal snRNPs contain a common set of Sm proteins, SNRPB, SNRPD1, SNRPD2, SNRPD3, SNRPE, SNRPF and SNRPG that assemble in a heptameric protein ring on the Sm site of the small nuclear RNA to form the core snRNP. Component of the U1 snRNP. The U1 snRNP is composed of the U1 snRNA and the 7 core Sm proteins SNRPB, SNRPD1, SNRPD2, SNRPD3, SNRPE, SNRPF and SNRPG, and at least three U1 snRNP-specific proteins SNRNP70/U1-70K, SNRPA/U1-A and SNRPC/U1-C. Component of the U4/U6-U5 tri-snRNP complex composed of the U4, U6 and U5 snRNAs and at least PRPF3, PRPF4, PRPF6, PRPF8, PRPF31, SNRNP200, TXNL4A, SNRNP40, SNRPB, SNRPD1, SNRPD2, SNRPD3, SNRPE, SNRPF, SNRPG, DDX23, CD2BP2, PPIH, SNU13, EFTUD2, SART1 and USP39, plus LSM2, LSM3, LSM4, LSM5, LSM6, LSM7 and LSM8. Component of the minor spliceosome, which splices U12-type introns. Part of the SMN-Sm complex that contains SMN1, GEMIN2/SIP1, DDX20/GEMIN3, GEMIN4, GEMIN5, GEMIN6, GEMIN7, GEMIN8, STRAP/UNRIP and the Sm proteins SNRPB, SNRPD1, SNRPD2, SNRPD3, SNRPE, SNRPF and SNRPG; catalyzes core snRNPs assembly. Forms a 6S pICln-Sm complex composed of CLNS1A/pICln, SNRPD1, SNRPD2, SNRPE, SNRPF and SNRPG; ring-like structure where CLNS1A/pICln mimics additional Sm proteins and which is unable to assemble into the core snRNP. Interacts with SMN1; the interaction is direct. Interacts with GEMIN2; the interaction is direct. Interacts with SNRPD1; the interaction is direct. Interacts with SNRPF; the interaction is direct.

The protein resides in the cytoplasm. Its subcellular location is the cytosol. The protein localises to the nucleus. In terms of biological role, plays a role in pre-mRNA splicing as a core component of the spliceosomal U1, U2, U4 and U5 small nuclear ribonucleoproteins (snRNPs), the building blocks of the spliceosome. Component of both the pre-catalytic spliceosome B complex and activated spliceosome C complexes. As a component of the minor spliceosome, involved in the splicing of U12-type introns in pre-mRNAs. This Homo sapiens (Human) protein is Small nuclear ribonucleoprotein Sm D2 (SNRPD2).